The chain runs to 556 residues: Guanine nucleotide-binding protein-like 3 homolog (556 aa).

The interval 29 to 50 (NRKVKKEAKKNGTTNKKEKTIS) is disordered. Residues 58 to 95 (KEEILVQAEQEREKIKVRQEAAKEAAKIHRIEKRKNNL) are a coiled coil. One can recognise a CP-type G domain in the interval 138–317 (ASEVRKTVEI…LIDSPGVILV (180 aa)). GTP is bound by residues 184 to 187 (NKID), 266 to 273 (GFPNVGKS), and 310 to 313 (DSPG). Disordered regions lie at residues 461-508 (APHN…PESL) and 525-556 (KKQK…AMEM). Residues 466–478 (DEEEDDDDEMETD) are compositionally biased toward acidic residues. A compositionally biased stretch (basic residues) spans 525–535 (KKQKKKSKKTA).

This sequence belongs to the TRAFAC class YlqF/YawG GTPase family.

The protein localises to the nucleus. Functionally, may play a role in regulating cellular proliferation in both germline and somatic tissues. The protein is Guanine nucleotide-binding protein-like 3 homolog of Caenorhabditis elegans.